We begin with the raw amino-acid sequence, 451 residues long: Tubulin alpha-3 chain (451 aa).

Residue Gln-11 coordinates GTP. Lys-40 is modified (N6-acetyllysine). The GTP site is built by Glu-71, Gly-144, Thr-145, Thr-179, Asn-206, and Asn-228. Position 71 (Glu-71) interacts with Mg(2+). Residue Glu-254 is part of the active site.

The protein belongs to the tubulin family. Dimer of alpha and beta chains. A typical microtubule is a hollow water-filled tube with an outer diameter of 25 nm and an inner diameter of 15 nM. Alpha-beta heterodimers associate head-to-tail to form protofilaments running lengthwise along the microtubule wall with the beta-tubulin subunit facing the microtubule plus end conferring a structural polarity. Microtubules usually have 13 protofilaments but different protofilament numbers can be found in some organisms and specialized cells. Mg(2+) serves as cofactor. Undergoes a tyrosination/detyrosination cycle, the cyclic removal and re-addition of a C-terminal tyrosine residue by the enzymes tubulin tyrosine carboxypeptidase (TTCP) and tubulin tyrosine ligase (TTL), respectively. In terms of processing, acetylation of alpha chains at Lys-40 stabilizes microtubules and affects affinity and processivity of microtubule motors. This modification has a role in multiple cellular functions, ranging from cell motility, cell cycle progression or cell differentiation to intracellular trafficking and signaling.

The protein localises to the cytoplasm. Its subcellular location is the cytoskeleton. The catalysed reaction is GTP + H2O = GDP + phosphate + H(+). In terms of biological role, tubulin is the major constituent of microtubules, a cylinder consisting of laterally associated linear protofilaments composed of alpha- and beta-tubulin heterodimers. Microtubules grow by the addition of GTP-tubulin dimers to the microtubule end, where a stabilizing cap forms. Below the cap, tubulin dimers are in GDP-bound state, owing to GTPase activity of alpha-tubulin. This chain is Tubulin alpha-3 chain (TUBA3), found in Hordeum vulgare (Barley).